A 286-amino-acid polypeptide reads, in one-letter code: 4-diphosphocytidyl-2-C-methyl-D-erythritol kinase (286 aa).

The active site involves lysine 11. 93-103 contacts ATP; that stretch reads PFGAGLGGGSS. Aspartate 135 is a catalytic residue.

This sequence belongs to the GHMP kinase family. IspE subfamily.

It catalyses the reaction 4-CDP-2-C-methyl-D-erythritol + ATP = 4-CDP-2-C-methyl-D-erythritol 2-phosphate + ADP + H(+). Its pathway is isoprenoid biosynthesis; isopentenyl diphosphate biosynthesis via DXP pathway; isopentenyl diphosphate from 1-deoxy-D-xylulose 5-phosphate: step 3/6. Functionally, catalyzes the phosphorylation of the position 2 hydroxy group of 4-diphosphocytidyl-2C-methyl-D-erythritol. This is 4-diphosphocytidyl-2-C-methyl-D-erythritol kinase from Chlorobaculum parvum (strain DSM 263 / NCIMB 8327) (Chlorobium vibrioforme subsp. thiosulfatophilum).